The following is a 151-amino-acid chain: MEKVESFKLDHTKVKAPFVRKCSVLDGVKGDKVTKFDLRFLQPNVESFGTAAMHGLEHLLATYLRDTLDGVIDLSPMGCRTGFYLILWGDVDAKTVKIGLEEALKKVLESDKMPAATAIECGNYRDLSLFGAKEYAKDVLDKGFSLNIYGE.

Residues His54, His58, and Cys121 each coordinate Fe cation.

It belongs to the LuxS family. In terms of assembly, homodimer. It depends on Fe cation as a cofactor.

It catalyses the reaction S-(5-deoxy-D-ribos-5-yl)-L-homocysteine = (S)-4,5-dihydroxypentane-2,3-dione + L-homocysteine. Functionally, involved in the synthesis of autoinducer 2 (AI-2) which is secreted by bacteria and is used to communicate both the cell density and the metabolic potential of the environment. The regulation of gene expression in response to changes in cell density is called quorum sensing. Catalyzes the transformation of S-ribosylhomocysteine (RHC) to homocysteine (HC) and 4,5-dihydroxy-2,3-pentadione (DPD). The sequence is that of S-ribosylhomocysteine lyase from Clostridioides difficile (strain 630) (Peptoclostridium difficile).